The following is a 441-amino-acid chain: Phenoloxidase-activating enzyme (441 aa).

The first 21 residues, 1 to 21 (MFLIWTFIVAVLAIQTKSVVA), serve as a signal peptide directing secretion. Position 22 is a pyrrolidone carboxylic acid (glutamine 22). Clip domains are found at residues 23 to 76 (SCRT…AVCC) and 77 to 127 (PCNA…SICC). 8 disulfide bridges follow: cysteine 24/cysteine 75, cysteine 34/cysteine 65, cysteine 40/cysteine 76, cysteine 78/cysteine 126, cysteine 88/cysteine 117, cysteine 94/cysteine 127, cysteine 164/cysteine 305, and cysteine 203/cysteine 219. One can recognise a Peptidase S1 domain in the interval 174–440 (IVGGAPASID…YLPWIQNTIE (267 aa)). The active-site Charge relay system is the histidine 218. Positions 237, 239, 242, and 246 each coordinate Ca(2+). N-linked (GlcNAc...) asparagine glycosylation is present at asparagine 239. Aspartate 285 acts as the Charge relay system in catalysis. N-linked (GlcNAc...) asparagine glycosylation is present at asparagine 334. 2 disulfide bridges follow: cysteine 356–cysteine 377 and cysteine 387–cysteine 416. Serine 391 serves as the catalytic Charge relay system.

The protein belongs to the peptidase S1 family. CLIP subfamily. As to quaternary structure, in the active form, heterodimer of a light chain and a heavy chain; disulfide-linked. Proteolytically cleaved for activation. Cleavage produces a light chain and a catalytic heavy chain which remains covalently associated probably through an interchain disulfide bond. Post-translationally, glycosylated.

Stabilized by calcium. Inhibited by di-isopropyl phosphorofluoridate (DFP), phenylmethanesulfonylfluoride (PMSF), p-nitrophenyl-p'-guanidinobenzonate (p-NPGB), p-chloromercuribenzoate (PCMB), ethylenediaminetetraacetic acid (EDTA), urea and CI-13c. In terms of biological role, endopeptidase with selective post-Arg cleavage site. Activates prophenoloxidase. Has a probable role in the melanization process as part of the innate immune response. In Bombyx mori (Silk moth), this protein is Phenoloxidase-activating enzyme.